A 957-amino-acid chain; its full sequence is Dystrophin-related protein 2 (957 aa).

Spectrin repeat units lie at residues 102–179 (DHSG…EELE) and 231–337 (EQLL…QLQD). A WW domain is found at 358–383 (WERAISPNKVPYYINHQAQTTCWDHP). The ZZ-type; degenerate zinc finger occupies 605-661 (KHQTKCSICRQCPIKGFRYRSLKQFNVDICQTCFLTGRASKGNKLHYPIMEYYTPTT). Zn(2+) contacts are provided by Cys610, Cys613, Cys634, and Cys637. At Ser748 the chain carries Phosphoserine. Positions 877-900 (PPTESDGSGSAGSSLASSPQQSEG) are enriched in low complexity. Positions 877–923 (PPTESDGSGSAGSSLASSPQQSEGSHPREKGQTTPDTEAADDVGSKS) are disordered. Phosphothreonine is present on Thr910.

In terms of assembly, interacts with PRX; this enhances phosphorylation. Identified in a dystroglycan complex that contains at least PRX, DRP2, UTRN, DMD and DAG1. As to expression, detected in fetal brain.

The protein localises to the postsynaptic density. The protein resides in the cell projection. Its subcellular location is the dendrite. It localises to the perikaryon. It is found in the cell membrane. Required for normal myelination and for normal organization of the cytoplasm and the formation of Cajal bands in myelinating Schwann cells. Required for normal PRX location at appositions between the abaxonal surface of the myelin sheath and the Schwann cell plasma membrane. Possibly involved in membrane-cytoskeleton interactions of the central nervous system. This chain is Dystrophin-related protein 2 (DRP2), found in Homo sapiens (Human).